A 142-amino-acid chain; its full sequence is Hemoglobin subunit alpha-A (142 aa).

The Globin domain occupies 2–142; that stretch reads VLSAADKTNV…VGAVLTAKYR (141 aa). Residue His59 coordinates O2. A heme b-binding site is contributed by His88.

This sequence belongs to the globin family. As to quaternary structure, heterotetramer of two alpha chains and two beta chains. In terms of tissue distribution, red blood cells.

In terms of biological role, involved in oxygen transport from the lung to the various peripheral tissues. In Anas platyrhynchos platyrhynchos (Northern mallard), this protein is Hemoglobin subunit alpha-A (HBAA).